An 85-amino-acid chain; its full sequence is Large ribosomal subunit protein bL27 (85 aa).

The interval 1-20 (MAHKKAGGSSRNGRDSEAKR) is disordered.

Belongs to the bacterial ribosomal protein bL27 family.

The sequence is that of Large ribosomal subunit protein bL27 from Aeromonas salmonicida (strain A449).